Here is a 158-residue protein sequence, read N- to C-terminus: 2-C-methyl-D-erythritol 2,4-cyclodiphosphate synthase (158 aa).

Aspartate 8 and histidine 10 together coordinate a divalent metal cation. Residues 8-10 and 34-35 contribute to the 4-CDP-2-C-methyl-D-erythritol 2-phosphate site; these read DVH and HS. Histidine 42 serves as a coordination point for a divalent metal cation. 4-CDP-2-C-methyl-D-erythritol 2-phosphate is bound by residues 56–58, 61–65, 100–106, 132–135, phenylalanine 139, and lysine 142; these read DIG, FPDTD, AQKPKML, and TTEE.

The protein belongs to the IspF family. In terms of assembly, homotrimer. It depends on a divalent metal cation as a cofactor.

The enzyme catalyses 4-CDP-2-C-methyl-D-erythritol 2-phosphate = 2-C-methyl-D-erythritol 2,4-cyclic diphosphate + CMP. It functions in the pathway isoprenoid biosynthesis; isopentenyl diphosphate biosynthesis via DXP pathway; isopentenyl diphosphate from 1-deoxy-D-xylulose 5-phosphate: step 4/6. Its function is as follows. Involved in the biosynthesis of isopentenyl diphosphate (IPP) and dimethylallyl diphosphate (DMAPP), two major building blocks of isoprenoid compounds. Catalyzes the conversion of 4-diphosphocytidyl-2-C-methyl-D-erythritol 2-phosphate (CDP-ME2P) to 2-C-methyl-D-erythritol 2,4-cyclodiphosphate (ME-CPP) with a corresponding release of cytidine 5-monophosphate (CMP). The protein is 2-C-methyl-D-erythritol 2,4-cyclodiphosphate synthase of Clostridium tetani (strain Massachusetts / E88).